Consider the following 77-residue polypeptide: Chaplin-H (77 aa).

A signal peptide spans 1–25 (MLKKVVAAAAATGGLVLAGAGMAVA). The Chaplin domain maps to 36–76 (SPGVLSGNVVQVPVHVPVNVCGNTISVIGLLNPAFGNVCIN). Forms amyloid fibrils in vitro regions lie at residues 38–54 (GVLS…VPVN) and 57–72 (GNTI…AFGN). Cysteines 56 and 74 form a disulfide.

It belongs to the chaplin family. Short chaplin subfamily. Homodimer; disulfide linked. About 10% of ChpH isolated from cell wall forms disulfide-bonded homodimers.

It is found in the cell surface. The protein localises to the secreted. It localises to the cell wall. The protein resides in the fimbrium. Functionally, one of 8 partially redundant surface-active proteins required for efficient formation of aerial mycelium; the short chaplins assemble into a hydrophobic, amyloidal fibrillar surface layer that envelopes and protects aerial hyphae and spores, presumably anchored to the long chaplins. Chaplins have an overlapping function with the surface-active SapB peptide; chaplins are essential on minimal medium while on rich medium both chaplins and SapB are required for efficient aerial hyphae formation. Chaplins are also involved in cell attachment to a hydrophobic surface. Forms amyloid fibrils in vitro probably composed of stacked beta-sheets. A small chaplin extract (ChpD, ChpE, ChpF, ChpG and ChpH) self-assembles into 2 different amyloids; small fibrils at the air-water interface form an amphipathic membrane that resembles spore-surface structures involved in aerial hyphae formation, and hydrophilic fibrils in solution that resemble the fibers that attach cells to a hydrophobic surface. At the air-water interface the hydrophilic surface is in contact with water (probably equivalent to the peptidoglycan layer), while the hydrophobic face is exposed to the air, making the surface of the aerial hyphae hydrophobic. A minimal chaplin strain capable of forming aerial mycelium/hyphae on minimal medium contains ChpC, ChpE and ChpH. The strain also has restored rodlet formation on the hyphae surface. A small chaplin extract applied to a chaplin-deficient strain restores aerial hyphae formation. The small chaplin extract forms an amyloid-like structure similar to that seen on the surface of cells without rodlets (rdlA-rdlB deletions), and is highly surface active, reducing surface tension from 72 to 26 mJ/m(2), which probably allows escape of hyphae from an aqueous environment into air. The polypeptide is Chaplin-H (Streptomyces coelicolor (strain ATCC BAA-471 / A3(2) / M145)).